A 285-amino-acid chain; its full sequence is Energy-coupling factor transporter ATP-binding protein EcfA1 (285 aa).

The ABC transporter domain maps to 9-246 (VTVEHLSFTY…VSLIKNAGLD (238 aa)). Position 43-50 (43-50 (GHNGSGKS)) interacts with ATP.

Belongs to the ABC transporter superfamily. Energy-coupling factor EcfA family. Forms a stable energy-coupling factor (ECF) transporter complex composed of 2 membrane-embedded substrate-binding proteins (S component), 2 ATP-binding proteins (A component) and 2 transmembrane proteins (T component).

The protein resides in the cell membrane. Functionally, ATP-binding (A) component of a common energy-coupling factor (ECF) ABC-transporter complex. Unlike classic ABC transporters this ECF transporter provides the energy necessary to transport a number of different substrates. The chain is Energy-coupling factor transporter ATP-binding protein EcfA1 from Lactobacillus gasseri (strain ATCC 33323 / DSM 20243 / BCRC 14619 / CIP 102991 / JCM 1131 / KCTC 3163 / NCIMB 11718 / NCTC 13722 / AM63).